A 552-amino-acid chain; its full sequence is ATP synthase subunit alpha (552 aa).

173–180 (GDRQTGKT) contributes to the ATP binding site. Residues 526-552 (ASPLDPSAVRKESIPVHRAPARTDDEG) are disordered. Positions 533–552 (AVRKESIPVHRAPARTDDEG) are enriched in basic and acidic residues.

Belongs to the ATPase alpha/beta chains family. As to quaternary structure, F-type ATPases have 2 components, CF(1) - the catalytic core - and CF(0) - the membrane proton channel. CF(1) has five subunits: alpha(3), beta(3), gamma(1), delta(1), epsilon(1). CF(0) has three main subunits: a(1), b(2) and c(9-12). The alpha and beta chains form an alternating ring which encloses part of the gamma chain. CF(1) is attached to CF(0) by a central stalk formed by the gamma and epsilon chains, while a peripheral stalk is formed by the delta and b chains.

It is found in the cell membrane. It carries out the reaction ATP + H2O + 4 H(+)(in) = ADP + phosphate + 5 H(+)(out). Functionally, produces ATP from ADP in the presence of a proton gradient across the membrane. The alpha chain is a regulatory subunit. The sequence is that of ATP synthase subunit alpha from Frankia alni (strain DSM 45986 / CECT 9034 / ACN14a).